The sequence spans 239 residues: DNA repair protein RecO (239 aa).

Belongs to the RecO family.

Involved in DNA repair and RecF pathway recombination. The polypeptide is DNA repair protein RecO (Bifidobacterium animalis subsp. lactis (strain AD011)).